The primary structure comprises 353 residues: O-antigen biosynthesis glycosyltransferase WclY (353 aa).

A helical transmembrane segment spans residues 116–136; that stretch reads SLIGGLLWCSIWLFFDKLVIL. Residues asparagine 190 and glutamate 271 each coordinate UDP. The short motif at 263-271 is the E(x7)E element; the sequence is EGFGLTVLE.

Belongs to the glycosyltransferase group 1 family. Glycosyltransferase 4 subfamily.

The protein resides in the membrane. Its pathway is bacterial outer membrane biogenesis; LPS O-antigen biosynthesis. With respect to regulation, activated by 5mM MnCl(2) and MgCl(2). No significant effect on activity by 5 mM ethylenediaminetetraacetic acid (EDTA), 0.125-0.5% Triton X-100 or dithiothreitol (DTT). Inhibited by 5 mM Zn-acetate. Involved in the assembly of the O-repeating unit during O-antigen biosynthesis. Glucosyltransferase accountable for the alpha-D-Glc-1,4-beta-D-Gal linkage within the O-antigen. Transfers alpha-1,4-Glc to the Gal moiety of a specific Gal-beta1-3GalNAc-alpha-OPO3-PO3-phenoxyundecyl (Gal-beta1-3GalNAc-PP-PhU) synthetic natural acceptor substrate analog. Requires both Gal-beta1-3GalNAc-alpha and the diphosphate moiety in the acceptor. Not active with GalNAc-PP-PhU, GlcNAc-PP-PhU, Gal-beta1-3GalNAc-alpha-O-benzyl, D-Rha-alpha1-3GlcNAc-alpha-PP-PhU or D-Man-alpha1-3Man-alpha-5-benzamidopentyl (BAP), nor with glycopeptides TTTVTP (Gal-beta1-3GalNAc-alpha-)TPTG or TT (Gal-beta1-3GalNAc-alpha-)TVTPTPTG as acceptor substrates. Has a broad nucleotide sugar donor substrate specificity with ADP-Glc, TDP-Glc and UDP-Glc as superior donors. Gal, GlcNAc, and GalNAc residues are transferred from UDP-sugars, but with low activity. UDP-Xyl, UDP-GlcA, GDP-Fuc or GDP-K-Rha do not act as donors. The polypeptide is O-antigen biosynthesis glycosyltransferase WclY (Escherichia coli).